Reading from the N-terminus, the 248-residue chain is Small ribosomal subunit protein uS2 (248 aa).

It belongs to the universal ribosomal protein uS2 family.

This is Small ribosomal subunit protein uS2 from Herminiimonas arsenicoxydans.